The following is a 546-amino-acid chain: Cytochrome P450 monooxygenase gloP (546 aa).

Residues 17 to 37 (TLSGGILTFLFIVVIAHFVLT) traverse the membrane as a helical segment. N-linked (GlcNAc...) asparagine glycans are attached at residues asparagine 189, asparagine 413, and asparagine 416. Cysteine 492 is a binding site for heme.

It belongs to the cytochrome P450 family. Heme serves as cofactor.

Its subcellular location is the membrane. It functions in the pathway mycotoxin biosynthesis. Functionally, cytochrome P450 monooxygenase; part of the gene cluster that mediates the biosynthesis of pneumocandins, lipohexapeptides of the echinocandin family that prevent fungal cell wall formation by non-competitive inhibition of beta-1,3-glucan synthase. The 10,12-dimethylmyristoyl side chain is synthesized by the reducing polyketide synthase gloL/GLPKS4. The thioesterase gloN/GLHYD exclusively interacts with gloL/GLPKS4 to maintain turnover of the polyketide side chain. The 10R,12S-dimethylmyristic acid is then transferred to the first thiolation domain of the nonribosomal peptide synthetase gloA/GLNRPS4 by the acyl-AMP ligase gloD/GLligase, followed by its acylation to L-ornithine to trigger elongation of the cyclic hexapeptide. L-ornithine, 4R-hydroxyl-L-proline (generated from L-proline by the dioxygenase gloF/GLOXY2), 3S-hydroxyl-L-homotyrosine (generated by gloG/GLHtyB, gloH/GLHtyA, gloI/GLHtyC, gloJ/GLHtyD and hydroxylated at C-3 by the dioxygenase gloM/GLOXY1), 3R-hydroxyl-L-glutamine (generated from L-glutamine probably by the dioxygenase gloE/GLOXY3) and 3S-hydroxyl-L-proline (generated from L-proline by the dioxygenase gloF/GLOXY2 to yield pneumocandin B0), or 3S-hydroxyl-4S-methyl-L-proline (generated from L-leucine by the dioxygenase gloC/GLOXY4 to yield pneumocandin A0) are sequentially added to the growing chain. The last C domain of gloA/GLNRPS4 is proposed to be responsible for cyclization by condensation to form the peptide bond between L-ornithine and 3S-hydroxyl-4S-methyl-L-proline (for pneumocandin A0) or 3S-hydroxyl-L-proline (for pneumocandin B0). Finally, the subsequent C-4 hydroxylation of 3S-hydroxyl-L-homotyrosine and L-ornithine dihydroxylation at C-4 and C-5 are performed by the cytochrome P450 monooxygenases gloP/GLP450-1 and gloO/GLP450-2, respectively. The sequence is that of Cytochrome P450 monooxygenase gloP from Glarea lozoyensis (strain ATCC 20868 / MF5171).